A 210-amino-acid chain; its full sequence is Probable sporulation protein YtaF (210 aa).

The next 6 membrane-spanning stretches (helical) occupy residues 6-26 (ILLL…TYGL), 36-56 (ILVI…IGSF), 69-89 (LGGL…FKPA), 129-149 (VING…AFGA), 162-184 (VMSI…AGHF), and 190-210 (WIDK…LWKL).

The protein resides in the cell membrane. This is Probable sporulation protein YtaF (ytaF) from Bacillus subtilis (strain 168).